Reading from the N-terminus, the 189-residue chain is Interferon alpha-14 (189 aa).

Positions 1–23 (MALPFALMMALVVLSCKSSCSLG) are cleaved as a signal peptide. Disulfide bonds link cysteine 24–cysteine 122 and cysteine 52–cysteine 162. An N-linked (GlcNAc...) asparagine glycan is attached at asparagine 95.

It belongs to the alpha/beta interferon family.

It localises to the secreted. Produced by macrophages, IFN-alpha have antiviral activities. Interferon stimulates the production of two enzymes: a protein kinase and an oligoadenylate synthetase. The protein is Interferon alpha-14 (IFNA14) of Homo sapiens (Human).